Reading from the N-terminus, the 344-residue chain is Phenylalanine--tRNA ligase alpha subunit (344 aa).

Glu-256 provides a ligand contact to Mg(2+).

It belongs to the class-II aminoacyl-tRNA synthetase family. Phe-tRNA synthetase alpha subunit type 1 subfamily. Tetramer of two alpha and two beta subunits. Mg(2+) is required as a cofactor.

The protein localises to the cytoplasm. The catalysed reaction is tRNA(Phe) + L-phenylalanine + ATP = L-phenylalanyl-tRNA(Phe) + AMP + diphosphate + H(+). The protein is Phenylalanine--tRNA ligase alpha subunit of Bacillus licheniformis (strain ATCC 14580 / DSM 13 / JCM 2505 / CCUG 7422 / NBRC 12200 / NCIMB 9375 / NCTC 10341 / NRRL NRS-1264 / Gibson 46).